The chain runs to 447 residues: Tubulin beta chain (447 aa).

8 residues coordinate GTP: Gln-11, Glu-69, Ser-138, Gly-142, Thr-143, Gly-144, Asn-204, and Asn-226. Glu-69 serves as a coordination point for Mg(2+). The segment at 424–447 (QYQDAGVDEEEEEYEEEAPLEGEE) is disordered. Residues 429 to 447 (GVDEEEEEYEEEAPLEGEE) show a composition bias toward acidic residues.

This sequence belongs to the tubulin family. As to quaternary structure, dimer of alpha and beta chains. A typical microtubule is a hollow water-filled tube with an outer diameter of 25 nm and an inner diameter of 15 nM. Alpha-beta heterodimers associate head-to-tail to form protofilaments running lengthwise along the microtubule wall with the beta-tubulin subunit facing the microtubule plus end conferring a structural polarity. Microtubules usually have 13 protofilaments but different protofilament numbers can be found in some organisms and specialized cells. Requires Mg(2+) as cofactor.

It is found in the cytoplasm. It localises to the cytoskeleton. Its function is as follows. Tubulin is the major constituent of microtubules, a cylinder consisting of laterally associated linear protofilaments composed of alpha- and beta-tubulin heterodimers. Microtubules grow by the addition of GTP-tubulin dimers to the microtubule end, where a stabilizing cap forms. Below the cap, tubulin dimers are in GDP-bound state, owing to GTPase activity of alpha-tubulin. The polypeptide is Tubulin beta chain (tub-2) (Neurospora crassa (strain ATCC 24698 / 74-OR23-1A / CBS 708.71 / DSM 1257 / FGSC 987)).